The sequence spans 465 residues: WAS protein family homolog 2 (465 aa).

The tract at residues 1–54 is required for WASH complex assembly; the sequence is MTPVRMQHSLAGQTYAVPLIQPDLRREEAVQQMADALQYLQKVSGDIFSRISQQ. Residues 1-167 form a WHD1 region; it reads MTPVRMQHSL…EGLGGLPSNI (167 aa). Lys220 participates in a covalent cross-link: Glycyl lysine isopeptide (Lys-Gly) (interchain with G-Cter in ubiquitin). Disordered regions lie at residues 297 to 407 and 422 to 465; these read QDGV…QGGH and GISG…DWES. The span at 302 to 314 shows a compositional bias: pro residues; it reads TPPPPPPPPPPAP. The interval 349-465 is VCA; that stretch reads QGAPREVVDP…AEEDEDDWES (117 aa). A WH2 domain is found at 361–383; it reads GRATLLESIRQAGGIGKAKLRSM. Residues 382-398 show a composition bias toward basic and acidic residues; sequence SMKERKLEKKKQKEQEQ. Residues 424–436 show a composition bias toward gly residues; that stretch reads SGKGPGAGEGPGG. Residues 456 to 465 are compositionally biased toward acidic residues; it reads AEEDEDDWES.

The protein belongs to the WASH1 family. As to quaternary structure, component of the WASH core complex also described as WASH regulatory complex (SHRC) composed of WASH (WASHC1, WASH2P or WASH3P), WASHC2 (WASHC2A or WASHC2C), WASHC3, WASHC4 and WASHC5. The WASH core complex associates with the F-actin-capping protein dimer (formed by CAPZA1, CAPZA2 or CAPZA3 and CAPZB) in a transient or substoichiometric manner which was initially described as WASH complex. Interacts (via WHD1 region) with WASHC2C; the interaction is direct. Interacts with alpha-tubulin. Interacts with BECN1; WASHC1 and AMBRA1 can competitively interact with BECN1. Interacts with BLOC1S2; may associate with the BLOC-1 complex. Interacts with tubulin gamma chain (TUBG1 or TUBG2). Interacts with EXOC1, EXOC4, EXOC8; in MMP14-positive endosomes in breast tumor cells; indicative for an association with the exocyst complex.

It is found in the early endosome membrane. It localises to the recycling endosome membrane. The protein localises to the late endosome. Its subcellular location is the cytoplasmic vesicle. The protein resides in the autophagosome. It is found in the cytoplasm. It localises to the cytoskeleton. The protein localises to the microtubule organizing center. Its subcellular location is the centrosome. The protein resides in the centriole. Acts as a nucleation-promoting factor at the surface of endosomes, where it recruits and activates the Arp2/3 complex to induce actin polymerization, playing a key role in the fission of tubules that serve as transport intermediates during endosome sorting. Involved in endocytic trafficking of EGF. Involved in transferrin receptor recycling. Regulates the trafficking of endosomal alpha5beta1 integrin to the plasma membrane and involved in invasive cell migration. In T-cells involved in endosome-to-membrane recycling of receptors including T-cell receptor (TCR), CD28 and ITGAL; proposed to be implicated in T-cell proliferation and effector function. In dendritic cells involved in endosome-to-membrane recycling of major histocompatibility complex (MHC) class II probably involving retromer and subsequently allowing antigen sampling, loading and presentation during T-cell activation. Involved in Arp2/3 complex-dependent actin assembly driving Salmonella typhimurium invasion independent of ruffling. Involved in the exocytosis of MMP14 leading to matrix remodeling during invasive migration and implicating late endosome-to-plasma membrane tubular connections and cooperation with the exocyst complex. Involved in negative regulation of autophagy independently from its role in endosomal sorting by inhibiting BECN1 ubiquitination to inactivate PIK3C3/Vps34 activity. The sequence is that of WAS protein family homolog 2 (WASH2P) from Homo sapiens (Human).